Reading from the N-terminus, the 216-residue chain is ATP phosphoribosyltransferase (216 aa).

This sequence belongs to the ATP phosphoribosyltransferase family. Short subfamily. Heteromultimer composed of HisG and HisZ subunits.

It is found in the cytoplasm. The enzyme catalyses 1-(5-phospho-beta-D-ribosyl)-ATP + diphosphate = 5-phospho-alpha-D-ribose 1-diphosphate + ATP. The protein operates within amino-acid biosynthesis; L-histidine biosynthesis; L-histidine from 5-phospho-alpha-D-ribose 1-diphosphate: step 1/9. Catalyzes the condensation of ATP and 5-phosphoribose 1-diphosphate to form N'-(5'-phosphoribosyl)-ATP (PR-ATP). Has a crucial role in the pathway because the rate of histidine biosynthesis seems to be controlled primarily by regulation of HisG enzymatic activity. This chain is ATP phosphoribosyltransferase, found in Rubrobacter xylanophilus (strain DSM 9941 / JCM 11954 / NBRC 16129 / PRD-1).